The following is a 97-amino-acid chain: Co-chaperonin GroES (97 aa).

It belongs to the GroES chaperonin family. In terms of assembly, heptamer of 7 subunits arranged in a ring. Interacts with the chaperonin GroEL.

The protein resides in the cytoplasm. In terms of biological role, together with the chaperonin GroEL, plays an essential role in assisting protein folding. The GroEL-GroES system forms a nano-cage that allows encapsulation of the non-native substrate proteins and provides a physical environment optimized to promote and accelerate protein folding. GroES binds to the apical surface of the GroEL ring, thereby capping the opening of the GroEL channel. The chain is Co-chaperonin GroES from Stenotrophomonas maltophilia (Pseudomonas maltophilia).